A 444-amino-acid chain; its full sequence is tRNA modification GTPase MnmE (444 aa).

(6S)-5-formyl-5,6,7,8-tetrahydrofolate is bound by residues Arg28, Glu86, and Arg126. The TrmE-type G domain occupies 224–368; that stretch reads GFCVVLAGAP…LLDAIQGSAA (145 aa). Residue Asn234 coordinates K(+). GTP contacts are provided by residues 234 to 239, 253 to 259, and 278 to 281; these read NAGKST, SDIPGTT, and DTAG. Residue Ser238 participates in Mg(2+) binding. Residues Ser253, Ile255, and Thr258 each coordinate K(+). Thr259 contacts Mg(2+). Lys444 contributes to the (6S)-5-formyl-5,6,7,8-tetrahydrofolate binding site.

It belongs to the TRAFAC class TrmE-Era-EngA-EngB-Septin-like GTPase superfamily. TrmE GTPase family. Homodimer. Heterotetramer of two MnmE and two MnmG subunits. K(+) serves as cofactor.

The protein localises to the cytoplasm. Its function is as follows. Exhibits a very high intrinsic GTPase hydrolysis rate. Involved in the addition of a carboxymethylaminomethyl (cmnm) group at the wobble position (U34) of certain tRNAs, forming tRNA-cmnm(5)s(2)U34. The polypeptide is tRNA modification GTPase MnmE (Methylorubrum populi (strain ATCC BAA-705 / NCIMB 13946 / BJ001) (Methylobacterium populi)).